The sequence spans 1550 residues: MDPSAPQPRAETSGKDIWHPGERCLAPSPDNGKLCEASIKSITVDENGKSFAVVLYADFQERKIPLKQLQEVKFVKDCPRNLIFDDEDLEKPYFPNRKFPSSSVAFKLSDNGDSIPYTINRYLRDYQREGTRFLYGHYIHGGGCILGDDMGLGKTVQVISFLAAVLHKKGTREDIENNMPEFLLRSMKKEPLSSTAKKMFLIVAPLSVLYNWKDELDTWGYFRVTVLHGNRKDNELIRVKQRKCEIALTTYETLRLCLDELNSLEWSAVIVDEAHRIKNPKARVTEVMKALKCNVRIGLTGTILQNNMKELWCVMDWAVPGLLGSGTYFKKQFSDPVEHGQRHTATKRELATGRKAMQRLAKKMSGWFLRRTKTLIKDQLPKKEDRMVYCSLTDFQKAVYQTVLETEDVTLILQSSEPCTCRSGQKRRNCCYKTNSHGETVKTLYLSYLTVLQKVANHVALLQAASTSKQQETLIKRICDQVFSRFPDFVQKSKDAAFETLSDPKYSGKMKVLQQLLNHCRKNRDKVLLFSFSTKLLDVLQQYCMASGLDYRRLDGSTKSEERLKIVKEFNSTQDVNICLVSTMAGGLGLNFVGANVVVLFDPTWNPANDLQAIDRAYRIGQCRDVKVLRLISLGTVEEIMYLRQIYKQQLHCVVVGSENAKRYFEAVQGSKEHQGELFGIHNLFKFRSQGSCLTKDILEREGQVEAGIMTATTWLKEGPPAHKLEMPRQPDCQECRGTEQAAEPLAKEACDLCSDFSDEEPVGATGIKTAKNKAPDSSKASSSPGQLTLLQCGFSKLLETKCKAVEDSDGNTASDDESSDEQPTCLSTEAKDAGCEKNQDSLGTSKHQKLDNILNPKEKHIFYKSEKILEQNISSKSDEKKIKNTDKHCILQNVTESEDSDVICPTQYTTERFPDNSIRFKPPLEGSEDSETEHTVKTRNNDNSRNTDDKRNGIISKKLSPENTTLKSILKRKGTSDISDESDDIEISSKSRVRKRASSLRFKRIKETKKELHNSPKTMNKTNQVYAANEDHNSQFIDDYSSSDESLSVSHFSFSKQSHRPRTIRDRTSFSSKLPSHNKKNSTFIPRKPMKCSNEKVVNQEQSYESMDKFLDGVQEVAYIHSNQNVIGSSKAENHMSRWAAHDVFELKQFSQLPANIAVCSSKTYKEKVDADTLPHTKKGQQPSEGSISLPLYISNPVNQKKKKVYHTNQTTFIIGETPKGIRRKQFEEMASYFNSSSVNEFAKHITNATSEERQKMLRDFYASQYPEVKEFFVDSVSQFNNSSFEKGEQRTRKKSDKRESLIKPRLSDSETLSFKDSTNKISQVCSLKTYKRKSVKFQNHISYREEVFFNDAETKKSPVSSTQEIDSGKNSQASEDTVTSRSLNSESETRERRLENTMKDQQDLTRTGISRKEPLLKLENKKIENPVLENTSVISLLGDTSILDDLFKSHGNSPTQLPKKVLSGPMEKAKQRPKDFWDILNEQNDESLSKLTDLAVIETLCEKAPLAAPFKRREEPATSLWKSNEKFLWKKFSPSDTDENATNTQSTT.

The segment at 1–23 is disordered; it reads MDPSAPQPRAETSGKDIWHPGER. The segment covering 12 to 22 has biased composition (basic and acidic residues); sequence TSGKDIWHPGE. In terms of domain architecture, Helicase ATP-binding spans 135–321; that stretch reads YGHYIHGGGC…WCVMDWAVPG (187 aa). 148–155 serves as a coordination point for ATP; the sequence is DDMGLGKT. Positions 272-275 match the DEAH box motif; it reads DEAH. The region spanning 512–662 is the Helicase C-terminal domain; the sequence is VLQQLLNHCR…CVVVGSENAK (151 aa). The Atypical PIP-box motif lies at 785–796; that stretch reads PGQLTLLQCGFS. Disordered stretches follow at residues 808–848, 914–1002, and 1354–1410; these read DSDG…TSKH, FPDN…SSLR, and AETK…TRTG. Composition is skewed to basic and acidic residues over residues 830-840 and 933-953; these read EAKDAGCEKNQ and TEHT…DKRN. Phosphoserine occurs at positions 980 and 983. Residues 992–1002 are compositionally biased toward basic residues; the sequence is SRVRKRASSLR. A compositionally biased stretch (polar residues) spans 1359–1388; the sequence is SPVSSTQEIDSGKNSQASEDTVTSRSLNSE. A phosphoserine mark is found at S1373 and S1376. Positions 1389–1405 are enriched in basic and acidic residues; that stretch reads SETRERRLENTMKDQQD.

Belongs to the SNF2/RAD54 helicase family. In terms of assembly, interacts with NEK6. Interacts (via an atypical PIP-box) with PCNA; this interaction facilitates cenrtomeric localization of ERCC6L2. Interacts with CYREN; this interaction is DNA independent. Interacts with XRCC6 and XRCC5. Post-translationally, phosphorylated by NEK6. As to expression, expressed in bone marrow (at protein level).

The protein resides in the nucleus. It is found in the cytoplasm. It localises to the cytoskeleton. The protein localises to the microtubule organizing center. Its subcellular location is the centrosome. The protein resides in the mitochondrion. It is found in the chromosome. It localises to the centromere. In terms of biological role, promotes double-strand break (DSB) end-joining and facilitates programmed recombination by controlling how DNA ends are joined in a spatially oriented manner during repair. Also plays a role in DNA repair by restricting DNA end resection in double strand break (DSB) repair. Facilitates replication of complex DNA regions and regulates the maintenance of chromatin structure. This chain is DNA excision repair protein ERCC-6-like 2, found in Homo sapiens (Human).